The primary structure comprises 322 residues: Nucleoprotein (322 aa).

Tyr43, Tyr46, Val76, Arg122, Lys240, and Ser269 together coordinate RNA.

The protein belongs to the tenuiviruses nucleocapsid protein family.

Its subcellular location is the virion. It is found in the host cytoplasm. Encapsidates the genome, protecting it from nucleases. The encapsidated genomic RNA is termed the nucleocapsid (NC), and serves as template for viral transcription and replication. This chain is Nucleoprotein, found in Avena sativa (Oat).